Consider the following 159-residue polypeptide: Eukaryotic translation initiation factor 5A-5 (159 aa).

The segment covering 1–12 (MSDEEHHFESKA) has biased composition (basic and acidic residues). A disordered region spans residues 1–23 (MSDEEHHFESKADAGASKTYPQQ). Hypusine is present on lysine 52.

Belongs to the eIF-5A family. Lys-52 undergoes hypusination, a unique post-translational modification that consists in the addition of a butylamino group from spermidine to lysine side chain, leading to the formation of the unusual amino acid hypusine. eIF-5As are the only known proteins to undergo this modification, which is essential for their function.

Translation factor that promotes translation elongation and termination, particularly upon ribosome stalling at specific amino acid sequence contexts. Binds between the exit (E) and peptidyl (P) site of the ribosome and promotes rescue of stalled ribosome: specifically required for efficient translation of polyproline-containing peptides as well as other motifs that stall the ribosome. Acts as a ribosome quality control (RQC) cofactor by joining the RQC complex to facilitate peptidyl transfer during CAT tailing step. The chain is Eukaryotic translation initiation factor 5A-5 (EIF5A5) from Solanum tuberosum (Potato).